The chain runs to 197 residues: Phosphoheptose isomerase (197 aa).

Residues 36–197 (LVHSLAQGGK…VDSLLLGVEE (162 aa)) enclose the SIS domain. A substrate-binding site is contributed by 51–53 (NGG). Zn(2+)-binding residues include His60 and Glu64. Substrate contacts are provided by residues Glu64, 93-94 (ND), 119-121 (STS), Ser124, and Gln174. Zn(2+) contacts are provided by Gln174 and His182.

This sequence belongs to the SIS family. GmhA subfamily. As to quaternary structure, homotetramer. It depends on Zn(2+) as a cofactor.

The protein localises to the cytoplasm. The catalysed reaction is 2 D-sedoheptulose 7-phosphate = D-glycero-alpha-D-manno-heptose 7-phosphate + D-glycero-beta-D-manno-heptose 7-phosphate. The protein operates within carbohydrate biosynthesis; D-glycero-D-manno-heptose 7-phosphate biosynthesis; D-glycero-alpha-D-manno-heptose 7-phosphate and D-glycero-beta-D-manno-heptose 7-phosphate from sedoheptulose 7-phosphate: step 1/1. Its function is as follows. Catalyzes the isomerization of sedoheptulose 7-phosphate in D-glycero-D-manno-heptose 7-phosphate. This chain is Phosphoheptose isomerase, found in Thiobacillus denitrificans (strain ATCC 25259 / T1).